Consider the following 412-residue polypeptide: MTSASEPEIAPDPINWKRNLFVAWIGCFLTGAAFSLIMPFLPLYVETLGVTGHESLNMWSGLVFSITFLFSAIASPFWGGLADRKGRKIMLLRSALGMSIVMVLMGFAQNIWQFLILRALLGLLGGFVPNANALIATQIPRNKSGWALGTLSTGGVSGALLGPLVGGLLADSYGLRPVFFITASVLFLCFIMTLYFIREQFVPVSKKDMLNRKQVFASLKNPKLVLCLFVTTMIIQVATGSIAPILTLYVRELAGNTQNLAFISGMIASVPGVAALMSAPRLGKLGDRIGPERILVAMMALSVLLLIPMALVQTPLQLGILRFLLGACDGALLPAVQTLLIYNCTNQVAGRVFSYNQSFRDVGNVTGPLLGAAVSASYGFRTVFFVTAMVVLFNAGYSYWCLQRRPHQAMID.

The next 10 helical transmembrane spans lie at 20–40 (LFVA…IMPF), 62–82 (LVFS…GGLA), 96–116 (LGMS…QFLI), 119–139 (ALLG…ATQI), 150–170 (TLST…GLLA), 177–197 (PVFF…LYFI), 225–245 (VLCL…IAPI), 260–280 (LAFI…MSAP), 294–314 (ILVA…LVQT), and 382–402 (TVFF…YWCL).

This sequence belongs to the major facilitator superfamily. DHA1 family. MdtG (TC 2.A.1.2.20) subfamily.

Its subcellular location is the cell inner membrane. This is Multidrug resistance protein MdtG from Rahnella sp. (strain Y9602).